The chain runs to 413 residues: Ribulose bisphosphate carboxylase/oxygenase activase, chloroplastic (413 aa).

The transit peptide at 1–54 (MAATVSTIGAVNRTTLNNSNYGGLVPNSAFLGSRLKVSSRFTTSKMVTGNFKIV) directs the protein to the chloroplast. Residue 162 to 169 (GGKGQGKS) participates in ATP binding.

The protein belongs to the RuBisCO activase family.

It localises to the plastid. The protein resides in the chloroplast stroma. Functionally, activation of RuBisCO (ribulose-1,5-bisphosphate carboxylase/oxygenase; EC 4.1.1.39) involves the ATP-dependent carboxylation of the epsilon-amino group of lysine leading to a carbamate structure. The sequence is that of Ribulose bisphosphate carboxylase/oxygenase activase, chloroplastic from Cucumis sativus (Cucumber).